The chain runs to 356 residues: Protein HEXIM1 (356 aa).

Basic and acidic residues-rich tracts occupy residues 1–11 (MAEPLLSEHQH) and 24–47 (VHEE…DSRW). Positions 1 to 160 (MAEPLLSEHQ…RRRPSKKKRH (160 aa)) are disordered. The segment covering 48–58 (QSRASLQSGSR) has biased composition (polar residues). The segment covering 84–93 (CLEKGEKGQN) has biased composition (basic and acidic residues). S98 and S103 each carry phosphoserine. Residues 145–160 (LGKKKHRRRPSKKKRH) show a composition bias toward basic residues. Residues 147 to 174 (KKKHRRRPSKKKRHWKPYYKLTWEEKKK) form a basic region; mediates nuclear localization and interaction with 7SK snRNA and NR3C1 region. An interaction with P-TEFb region spans residues 199–202 (PYNT). An autoinhibitory acidic region; in absence of 7SK snRNA interacts with the basic region preventing interaction with P-TEFb and modulating subcellular localization region spans residues 207-247 (MDDHDQEEPDLKTGLYPKRAAAKSDDTSDEDFVEEAGEEDG). The disordered stretch occupies residues 209-259 (DHDQEEPDLKTGLYPKRAAAKSDDTSDEDFVEEAGEEDGGSDGMGGDGSEF). S230 is subject to Phosphoserine. Phosphothreonine is present on T233. Positions 233–248 (TSDEDFVEEAGEEDGG) are enriched in acidic residues. 3 positions are modified to phosphoserine: S234, S249, and S257. Residues 280-346 (SKQELIKEYL…LTENELHRQQ (67 aa)) are a coiled coil. Positions 283–311 (ELIKEYLELEKCLSRKEDENNRLRLESKR) are mediates interaction with CCNT1. Positions 307 to 352 (LESKRLGGVDARVRELELELDRLRAENRQLLTENELHRQQERAPPS) are required for inhibition of ESR1-dependent transcription. The interval 337–356 (LTENELHRQQERAPPSKFGD) is disordered.

Belongs to the HEXIM family. As to quaternary structure, homooligomer and heterooligomer with HEXIM2; probably dimeric. Core component of the 7SK RNP complex, at least composed of 7SK RNA, LARP7, MEPCE, HEXIM1 (or HEXIM2) and P-TEFb (composed of CDK9 and CCNT1/cyclin-T1). Interacts with the N-CoR complex through NCOR1. Interacts with ESR1 and NR3C1. May interact with NF-kappa-B through RELA. Interacts with CCNT2; mediates formation of a tripartite complex with KPNA2. Part of the HDP-RNP complex composed of at least HEXIM1, PRKDC, XRCC5, XRCC6, paraspeckle proteins (SFPQ, NONO, PSPC1, RBM14, and MATR3) and NEAT1 non-coding RNA.

It is found in the nucleus. It localises to the cytoplasm. In terms of biological role, transcriptional regulator which functions as a general RNA polymerase II transcription inhibitor. Core component of the 7SK RNP complex: in cooperation with 7SK snRNA sequesters P-TEFb in a large inactive 7SK snRNP complex preventing RNA polymerase II phosphorylation and subsequent transcriptional elongation. May also regulate NF-kappa-B, ESR1, NR3C1 and CIITA-dependent transcriptional activity. Plays a role in the regulation of DNA virus-mediated innate immune response by assembling into the HDP-RNP complex, a complex that serves as a platform for IRF3 phosphorylation and subsequent innate immune response activation through the cGAS-STING pathway. The sequence is that of Protein HEXIM1 (Hexim1) from Rattus norvegicus (Rat).